Reading from the N-terminus, the 100-residue chain is Large ribosomal subunit protein eL36A (100 aa).

Threonine 2 is modified (N-acetylthreonine).

Belongs to the eukaryotic ribosomal protein eL36 family. Component of the large ribosomal subunit (LSU). Mature yeast ribosomes consist of a small (40S) and a large (60S) subunit. The 40S small subunit contains 1 molecule of ribosomal RNA (18S rRNA) and 33 different proteins (encoded by 57 genes). The large 60S subunit contains 3 rRNA molecules (25S, 5.8S and 5S rRNA) and 46 different proteins (encoded by 81 genes). N-terminally acetylated by acetyltransferase NatA.

The protein resides in the cytoplasm. Its function is as follows. Component of the ribosome, a large ribonucleoprotein complex responsible for the synthesis of proteins in the cell. The small ribosomal subunit (SSU) binds messenger RNAs (mRNAs) and translates the encoded message by selecting cognate aminoacyl-transfer RNA (tRNA) molecules. The large subunit (LSU) contains the ribosomal catalytic site termed the peptidyl transferase center (PTC), which catalyzes the formation of peptide bonds, thereby polymerizing the amino acids delivered by tRNAs into a polypeptide chain. The nascent polypeptides leave the ribosome through a tunnel in the LSU and interact with protein factors that function in enzymatic processing, targeting, and the membrane insertion of nascent chains at the exit of the ribosomal tunnel. In Saccharomyces cerevisiae (strain ATCC 204508 / S288c) (Baker's yeast), this protein is Large ribosomal subunit protein eL36A.